A 448-amino-acid polypeptide reads, in one-letter code: Phosphoglucosamine mutase (448 aa).

Serine 100 serves as the catalytic Phosphoserine intermediate. 4 residues coordinate Mg(2+): serine 100, aspartate 240, aspartate 242, and aspartate 244. Serine 100 is subject to Phosphoserine.

The protein belongs to the phosphohexose mutase family. Mg(2+) is required as a cofactor. Post-translationally, activated by phosphorylation.

The catalysed reaction is alpha-D-glucosamine 1-phosphate = D-glucosamine 6-phosphate. Its function is as follows. Catalyzes the conversion of glucosamine-6-phosphate to glucosamine-1-phosphate. In Bacillus anthracis (strain A0248), this protein is Phosphoglucosamine mutase.